The primary structure comprises 29 residues: Galanin (29 aa).

T29 is modified (threonine amide).

It belongs to the galanin family.

The protein resides in the secreted. Contracts smooth muscle of the gastrointestinal and genitourinary tract, regulates growth hormone release, modulates insulin release, and may be involved in the control of adrenal secretion. In Gallus gallus (Chicken), this protein is Galanin (GAL).